A 223-amino-acid chain; its full sequence is Putative oxidoreductase MT1904 (223 aa).

An NADP(+)-binding site is contributed by 4-28 (LVTGGDTDLGRTMAEGFRNDGHKVT). Residue Ser128 coordinates substrate.

The protein belongs to the short-chain dehydrogenases/reductases (SDR) family.

The chain is Putative oxidoreductase MT1904 from Mycobacterium tuberculosis (strain CDC 1551 / Oshkosh).